Reading from the N-terminus, the 332-residue chain is PTS-dependent dihydroxyacetone kinase, dihydroxyacetone-binding subunit DhaK (332 aa).

Residues 9–331 (QPQDVVSEML…LNEDVKTISW (323 aa)) form the DhaK domain. Residues 55–58 (GSGH), Lys106, and Asp111 each bind dihydroxyacetone. The Proton acceptor role is filled by His58. His220 functions as the Tele-hemiaminal-histidine intermediate in the catalytic mechanism.

Homodimer. The dihydroxyacetone kinase complex is composed of a homodimer of DhaM, a homodimer of DhaK and the subunit DhaL.

The enzyme catalyses dihydroxyacetone + phosphoenolpyruvate = dihydroxyacetone phosphate + pyruvate. Its pathway is polyol metabolism; glycerol degradation. Functionally, dihydroxyacetone binding subunit of the dihydroxyacetone kinase, which is responsible the phosphoenolpyruvate (PEP)-dependent phosphorylation of dihydroxyacetone via a phosphoryl group transfer from DhaL-ATP. The sequence is that of PTS-dependent dihydroxyacetone kinase, dihydroxyacetone-binding subunit DhaK from Lactococcus lactis subsp. lactis (strain IL1403) (Streptococcus lactis).